The chain runs to 517 residues: BTB/POZ domain-containing protein At3g49900 (517 aa).

The span at serine 28–serine 37 shows a compositional bias: low complexity. Residues serine 28–serine 49 are disordered. Positions proline 38–serine 49 are enriched in polar residues. One can recognise a BTB domain in the interval proline 67–proline 130. In terms of domain architecture, NPH3 spans leucine 224–asparagine 307. Residues alanine 409–serine 456 form a disordered region.

This sequence belongs to the NPH3 family.

The protein operates within protein modification; protein ubiquitination. In terms of biological role, may act as a substrate-specific adapter of an E3 ubiquitin-protein ligase complex (CUL3-RBX1-BTB) which mediates the ubiquitination and subsequent proteasomal degradation of target proteins. The sequence is that of BTB/POZ domain-containing protein At3g49900 from Arabidopsis thaliana (Mouse-ear cress).